The primary structure comprises 281 residues: Orotidine 5'-phosphate decarboxylase (281 aa).

Lysine 94 acts as the Proton donor in catalysis.

It belongs to the OMP decarboxylase family. Type 2 subfamily.

It catalyses the reaction orotidine 5'-phosphate + H(+) = UMP + CO2. It functions in the pathway pyrimidine metabolism; UMP biosynthesis via de novo pathway; UMP from orotate: step 2/2. The sequence is that of Orotidine 5'-phosphate decarboxylase from Thermomicrobium roseum (strain ATCC 27502 / DSM 5159 / P-2).